Here is a 95-residue protein sequence, read N- to C-terminus: Small ribosomal subunit protein uS19 (95 aa).

Positions 76-95 are disordered; that stretch reads PTRRFGGHADKKAKKGELKK. Residues 82 to 95 are compositionally biased toward basic and acidic residues; that stretch reads GHADKKAKKGELKK.

It belongs to the universal ribosomal protein uS19 family.

In terms of biological role, protein S19 forms a complex with S13 that binds strongly to the 16S ribosomal RNA. This is Small ribosomal subunit protein uS19 from Thermotoga neapolitana (strain ATCC 49049 / DSM 4359 / NBRC 107923 / NS-E).